A 228-amino-acid chain; its full sequence is Protein 33K (228 aa).

Positions 1 to 156 (MAPKKKLQLP…GALRLAPNEP (156 aa)) are disordered. The span at 15-53 (TDEEEYWDSQAEEVLDEEEEMMEDWDSLDEASEAEEVSD) shows a compositional bias: acidic residues. Composition is skewed to low complexity over residues 54-63 (ETPSPSVAFP) and 104-119 (AAPT…ATAA). A necessary for nuclear subcellular location region spans residues 171 to 198 (YAIFQQSRGQEQELKIKNRSLRSLTRSC). The RS-repeat; required for splicing enhancer activity stretch occupies residues 177–197 (SRGQEQELKIKNRSLRSLTRS).

Belongs to the adenoviridae splicing factor family. In terms of assembly, homooligomer. Interacts with DBP; this interaction occurs at a unique vertex during genome packaging. Interacts with IVa2; this interaction occurs at a unique vertex during genome packaging and seems to potentiate IVa2 and 33K oligomerization. Post-translationally, phosphorylated in vitro by human PKA and PRKDC. PRKDC inhibits, whereas PKA activates the splicing factor.

Its subcellular location is the host nucleus. Its function is as follows. Promotes alternative splicing of late transcripts by promoting splicing at weak 3' splice sites. Required for the temporal activation of major late pre-mRNA splicing at late times of infection. Induces the splicing and expression of the late capsid vertex protein. Functionally, probably functions as the small terminase that is part of the molecular motor that translocates genomic DNA in empty capsid during DNA packaging. This motor is located at a unique vertex and comprises at least the IVa2 ATPase, the small terminase 33K and probably a portal. Forms a ring-like structure of about 17 nm in which genomic DNA is translocated into the capsid. Stimulates IVa2 ATPase activity in the presence of the viral genome. Once the DNA is packaged, the terminase detaches: the 33K protein is present in the empty particles, but not in the mature virions. Also involved in virion assembly. In Homo sapiens (Human), this protein is Protein 33K.